A 210-amino-acid polypeptide reads, in one-letter code: Ribosomal RNA large subunit methyltransferase E (210 aa).

5 residues coordinate S-adenosyl-L-methionine: Gly55, Trp57, Asp75, Asp93, and Asp117. Lys157 serves as the catalytic Proton acceptor. The interval 175 to 210 is disordered; that stretch reads YRQVKTTKPPSSRKKSSEMYVVGLDFKPKKNKKSKD.

Belongs to the class I-like SAM-binding methyltransferase superfamily. RNA methyltransferase RlmE family.

It localises to the cytoplasm. The catalysed reaction is uridine(2552) in 23S rRNA + S-adenosyl-L-methionine = 2'-O-methyluridine(2552) in 23S rRNA + S-adenosyl-L-homocysteine + H(+). Functionally, specifically methylates the uridine in position 2552 of 23S rRNA at the 2'-O position of the ribose in the fully assembled 50S ribosomal subunit. The sequence is that of Ribosomal RNA large subunit methyltransferase E from Methanobrevibacter smithii (strain ATCC 35061 / DSM 861 / OCM 144 / PS).